The chain runs to 207 residues: Probable RNA 2'-phosphotransferase (207 aa).

The protein belongs to the KptA/TPT1 family.

Its function is as follows. Removes the 2'-phosphate from RNA via an intermediate in which the phosphate is ADP-ribosylated by NAD followed by a presumed transesterification to release the RNA and generate ADP-ribose 1''-2''-cyclic phosphate (APPR&gt;P). May function as an ADP-ribosylase. This chain is Probable RNA 2'-phosphotransferase, found in Methanosarcina mazei (strain ATCC BAA-159 / DSM 3647 / Goe1 / Go1 / JCM 11833 / OCM 88) (Methanosarcina frisia).